The sequence spans 232 residues: Small ribosomal subunit protein uS2 (232 aa).

The protein belongs to the universal ribosomal protein uS2 family.

In Baumannia cicadellinicola subsp. Homalodisca coagulata, this protein is Small ribosomal subunit protein uS2.